Consider the following 374-residue polypeptide: PqqA peptide cyclase (374 aa).

In terms of domain architecture, Radical SAM core spans 4 to 224; the sequence is IEPPMGLLAE…ERLKGVMVID (221 aa). [4Fe-4S] cluster contacts are provided by Cys18, Cys22, and Cys25.

The protein belongs to the radical SAM superfamily. PqqE family. As to quaternary structure, interacts with PqqD. The interaction is necessary for activity of PqqE. Requires [4Fe-4S] cluster as cofactor.

The enzyme catalyses [PQQ precursor protein] + S-adenosyl-L-methionine = E-Y cross-linked-[PQQ precursor protein] + 5'-deoxyadenosine + L-methionine + H(+). It functions in the pathway cofactor biosynthesis; pyrroloquinoline quinone biosynthesis. Functionally, catalyzes the cross-linking of a glutamate residue and a tyrosine residue in the PqqA protein as part of the biosynthesis of pyrroloquinoline quinone (PQQ). The chain is PqqA peptide cyclase from Granulibacter bethesdensis (strain ATCC BAA-1260 / CGDNIH1).